We begin with the raw amino-acid sequence, 339 residues long: Phosphate acyltransferase (339 aa).

This sequence belongs to the PlsX family. As to quaternary structure, homodimer. Probably interacts with PlsY.

The protein resides in the cytoplasm. It carries out the reaction a fatty acyl-[ACP] + phosphate = an acyl phosphate + holo-[ACP]. It participates in lipid metabolism; phospholipid metabolism. Its function is as follows. Catalyzes the reversible formation of acyl-phosphate (acyl-PO(4)) from acyl-[acyl-carrier-protein] (acyl-ACP). This enzyme utilizes acyl-ACP as fatty acyl donor, but not acyl-CoA. In Pasteurella multocida (strain Pm70), this protein is Phosphate acyltransferase.